A 278-amino-acid chain; its full sequence is Proteolipid protein DM beta (278 aa).

A run of 4 helical transmembrane segments spans residues 30-46 (LIATILLYAGVALFCGC), 84-100 (VIYGVAAAFFVYGILLM), 130-146 (FIMLTYIFMLAWLGVTA), and 213-229 (LFIVALAGAGAAVIAMV).

This sequence belongs to the myelin proteolipid protein family.

The protein resides in the membrane. In Squalus acanthias (Spiny dogfish), this protein is Proteolipid protein DM beta.